The sequence spans 545 residues: Glutamine-dependent NAD(+) synthetase (545 aa).

The region spanning 5-247 (LRIAMAQFDF…DQWLVVDYMR (243 aa)) is the CN hydrolase domain. Glutamate 46 functions as the Proton acceptor; for glutaminase activity in the catalytic mechanism. The active-site For glutaminase activity is the lysine 113. Residue tyrosine 119 participates in L-glutamine binding. The active-site Nucleophile; for glutaminase activity is cysteine 151. L-glutamine contacts are provided by serine 177 and lysine 183. Positions 269-545 (VWRAVVRGVQ…RYPISNAYRG (277 aa)) are ligase. 292–299 (GLSGGIDS) contacts ATP. Asparagine 375 lines the deamido-NAD(+) pocket. Threonine 399 lines the ATP pocket. Residues glutamate 404 and lysine 516 each coordinate deamido-NAD(+).

In the C-terminal section; belongs to the NAD synthetase family.

It carries out the reaction deamido-NAD(+) + L-glutamine + ATP + H2O = L-glutamate + AMP + diphosphate + NAD(+) + H(+). It participates in cofactor biosynthesis; NAD(+) biosynthesis; NAD(+) from deamido-NAD(+) (L-Gln route): step 1/1. In terms of biological role, catalyzes the ATP-dependent amidation of deamido-NAD to form NAD. Uses L-glutamine as a nitrogen source. This Xylella fastidiosa (strain 9a5c) protein is Glutamine-dependent NAD(+) synthetase.